Consider the following 415-residue polypeptide: UV excision repair protein RAD23 homolog B (415 aa).

The region spanning 1–79 is the Ubiquitin-like domain; the sequence is MQVTLKTLQQ…VVVMVTKPKA (79 aa). A disordered region spans residues 80–175; that stretch reads VTSAVPATTQ…STPGDSSRSN (96 aa). Residues 84-143 are compositionally biased toward low complexity; that stretch reads VPATTQQSSSPSTTTVSSSPAAAVAQAPAPTPALAPTSTPASTTPASTTASSEPAPTGAT. Thr155 carries the phosphothreonine modification. Phosphoserine is present on residues Ser160 and Ser174. Thr186 carries the phosphothreonine modification. The region spanning 188-228 is the UBA 1 domain; that stretch reads QSYENMVTEIMSMGYEREQVIAALRASFNNPDRAVEYLLMG. Ser199 carries the post-translational modification Phosphoserine. At Tyr202 the chain carries Phosphotyrosine. In terms of domain architecture, STI1 spans 274–317; that stretch reads HPLEFLRNQPQFQQMRQIIQQNPSLLPALLQQIGRENPQLLQQI. Residues 334-355 form a disordered region; the sequence is EAGGQGGGGGGGGGGGGGGGGI. The segment covering 336–355 has biased composition (gly residues); sequence GGQGGGGGGGGGGGGGGGGI. One can recognise a UBA 2 domain in the interval 370 to 410; the sequence is PQEKEAIERLKALGFPEGLVIQAYFACEKNENLAANFLLQQ.

The protein belongs to the RAD23 family. In terms of assembly, component of the XPC complex composed of XPC, RAD23B and CETN2. Interacts with NGLY1 and PSMC1. Interacts with ATXN3. Interacts with AMFR. Interacts with VCP; the interaction is indirect and mediated by NGLY1.

It is found in the nucleus. The protein localises to the cytoplasm. Multiubiquitin chain receptor involved in modulation of proteasomal degradation. Binds to polyubiquitin chains. Proposed to be capable to bind simultaneously to the 26S proteasome and to polyubiquitinated substrates and to deliver ubiquitinated proteins to the proteasome. May play a role in endoplasmic reticulum-associated degradation (ERAD) of misfolded glycoproteins by association with PNGase and delivering deglycosylated proteins to the proteasome. Its function is as follows. Involved in global genome nucleotide excision repair (GG-NER) by acting as component of the XPC complex. Cooperatively with Cetn2 appears to stabilize Xpc. May protect Xpc from proteasomal degradation. In terms of biological role, the XPC complex is proposed to represent the first factor bound at the sites of DNA damage and together with other core recognition factors, Xpa, RPA and the TFIIH complex, is part of the pre-incision (or initial recognition) complex. The XPC complex recognizes a wide spectrum of damaged DNA characterized by distortions of the DNA helix such as single-stranded loops, mismatched bubbles or single-stranded overhangs. The orientation of XPC complex binding appears to be crucial for inducing a productive NER. XPC complex is proposed to recognize and to interact with unpaired bases on the undamaged DNA strand which is followed by recruitment of the TFIIH complex and subsequent scanning for lesions in the opposite strand in a 5'-to-3' direction by the NER machinery. Cyclobutane pyrimidine dimers (CPDs) which are formed upon UV-induced DNA damage esacpe detection by the XPC complex due to a low degree of structural perurbation. Instead they are detected by the UV-DDB complex which in turn recruits and cooperates with the XPC complex in the respective DNA repair. In vitro, the XPC:RAD23B dimer is sufficient to initiate NER; it preferentially binds to cisplatin and UV-damaged double-stranded DNA and also binds to a variety of chemically and structurally diverse DNA adducts. XPC:RAD23B contacts DNA both 5' and 3' of a cisplatin lesion with a preference for the 5' side. Xpc:Rad22b induces a bend in DNA upon binding. Xpc:Rad23b stimulates the activity of DNA glycosylases Tdg and Smug1. The sequence is that of UV excision repair protein RAD23 homolog B (Rad23b) from Rattus norvegicus (Rat).